The chain runs to 100 residues: Small ribosomal subunit protein uS14c (100 aa).

Belongs to the universal ribosomal protein uS14 family. Part of the 30S ribosomal subunit.

It is found in the plastid. Its subcellular location is the chloroplast. Its function is as follows. Binds 16S rRNA, required for the assembly of 30S particles. In Crucihimalaya wallichii (Rock-cress), this protein is Small ribosomal subunit protein uS14c.